The sequence spans 498 residues: ATP synthase subunit beta, chloroplastic (498 aa).

172-179 (GGAGVGKT) contacts ATP.

The protein belongs to the ATPase alpha/beta chains family. In terms of assembly, F-type ATPases have 2 components, CF(1) - the catalytic core - and CF(0) - the membrane proton channel. CF(1) has five subunits: alpha(3), beta(3), gamma(1), delta(1), epsilon(1). CF(0) has four main subunits: a(1), b(1), b'(1) and c(9-12).

Its subcellular location is the plastid. The protein localises to the chloroplast thylakoid membrane. It catalyses the reaction ATP + H2O + 4 H(+)(in) = ADP + phosphate + 5 H(+)(out). Functionally, produces ATP from ADP in the presence of a proton gradient across the membrane. The catalytic sites are hosted primarily by the beta subunits. This is ATP synthase subunit beta, chloroplastic from Oryza nivara (Indian wild rice).